The chain runs to 258 residues: MELNEVTISRAIIDRFYEKLIANLEVDVAVVGGGPSGLVAAWRLARAGRKVALFERKLSIGGGMWGGAMLFNEIVVQKSALHVLDAMEIGYRLYAEDYYTADAVEAISTLTSQAAKAGVAIFNCVTVEDVMIRPDRIVGLVLNWSPVEMAGLHVDPLAMRASFVIDATGHATEVVHVVAKKVPGTLRTDSGKIEGEKSMWSDRAESLTLENTREVYPGLYVAGMAGNATFGGPRMGAIFGGMLLSGEKVAAEILERLE.

NAD(+)-binding positions include Ser-36, 55 to 56 (ER), Gly-63, Val-127, and 153 to 155 (HVD). Residues Asp-155 and His-170 each contribute to the Fe cation site. Residue Met-224 coordinates NAD(+). Glycine is bound at residue Arg-234.

This sequence belongs to the THI4 family. As to quaternary structure, homooctamer; tetramer of dimers. The cofactor is Fe(2+).

The enzyme catalyses hydrogen sulfide + glycine + NAD(+) = ADP-5-ethyl-4-methylthiazole-2-carboxylate + nicotinamide + 3 H2O + H(+). It participates in cofactor biosynthesis; thiamine diphosphate biosynthesis. Its function is as follows. Involved in the biosynthesis of the thiazole moiety of thiamine. Catalyzes the conversion of NAD and glycine to adenosine diphosphate 5-(2-hydroxyethyl)-4-methylthiazole-2-carboxylate (ADT), an adenylated thiazole intermediate, using free sulfide as a source of sulfur. The chain is Thiamine thiazole synthase from Desulfosudis oleivorans (strain DSM 6200 / JCM 39069 / Hxd3) (Desulfococcus oleovorans).